The following is a 347-amino-acid chain: Aspartate carbamoyltransferase catalytic subunit (347 aa).

Arg75 and Thr76 together coordinate carbamoyl phosphate. Lys103 contributes to the L-aspartate binding site. Residues Arg125, His153, and Gln156 each coordinate carbamoyl phosphate. L-aspartate is bound by residues Arg193 and Arg247. Carbamoyl phosphate-binding residues include Gly288 and Pro289.

It belongs to the aspartate/ornithine carbamoyltransferase superfamily. ATCase family. In terms of assembly, heterododecamer (2C3:3R2) of six catalytic PyrB chains organized as two trimers (C3), and six regulatory PyrI chains organized as three dimers (R2).

The catalysed reaction is carbamoyl phosphate + L-aspartate = N-carbamoyl-L-aspartate + phosphate + H(+). Its pathway is pyrimidine metabolism; UMP biosynthesis via de novo pathway; (S)-dihydroorotate from bicarbonate: step 2/3. Catalyzes the condensation of carbamoyl phosphate and aspartate to form carbamoyl aspartate and inorganic phosphate, the committed step in the de novo pyrimidine nucleotide biosynthesis pathway. The polypeptide is Aspartate carbamoyltransferase catalytic subunit (Erythrobacter litoralis (strain HTCC2594)).